Reading from the N-terminus, the 455-residue chain is Glutamyl-tRNA reductase (455 aa).

Residues 49-52, S109, 114-116, and Q120 contribute to the substrate site; these read TCNR and ETQ. Residue C50 is the Nucleophile of the active site. 189 to 194 is a binding site for NADP(+); sequence GAGKMG.

It belongs to the glutamyl-tRNA reductase family. As to quaternary structure, homodimer.

The catalysed reaction is (S)-4-amino-5-oxopentanoate + tRNA(Glu) + NADP(+) = L-glutamyl-tRNA(Glu) + NADPH + H(+). It participates in porphyrin-containing compound metabolism; protoporphyrin-IX biosynthesis; 5-aminolevulinate from L-glutamyl-tRNA(Glu): step 1/2. Catalyzes the NADPH-dependent reduction of glutamyl-tRNA(Glu) to glutamate 1-semialdehyde (GSA). The sequence is that of Glutamyl-tRNA reductase from Bacillus velezensis (strain DSM 23117 / BGSC 10A6 / LMG 26770 / FZB42) (Bacillus amyloliquefaciens subsp. plantarum).